We begin with the raw amino-acid sequence, 82 residues long: Ice-structuring protein A (82 aa).

The signal sequence occupies residues 1-23 (MALSLFTVGQLIFLFWTMRITEA). The propeptide at 24-44 (SPDPAAKAAPAAAAAPAAAAP) is removed by a dipeptidylpeptidase. At arginine 81 the chain carries Arginine amide.

It belongs to the type-I AFP family. In terms of tissue distribution, detected in liver and in blood serum (at protein level).

It localises to the secreted. In terms of biological role, contributes to protect fish blood from freezing at subzero sea water temperatures. Lowers the blood freezing point. Binds to nascent ice crystals and prevents further growth. The protein is Ice-structuring protein A of Pseudopleuronectes americanus (Winter flounder).